Reading from the N-terminus, the 195-residue chain is Imidazole glycerol phosphate synthase subunit HisH (195 aa).

In terms of domain architecture, Glutamine amidotransferase type-1 spans 1–195 (MIAVVDLGIG…LRLLENFRRL (195 aa)). Cysteine 72 serves as the catalytic Nucleophile. Active-site residues include histidine 177 and glutamate 179.

In terms of assembly, heterodimer of HisH and HisF.

The protein resides in the cytoplasm. The catalysed reaction is 5-[(5-phospho-1-deoxy-D-ribulos-1-ylimino)methylamino]-1-(5-phospho-beta-D-ribosyl)imidazole-4-carboxamide + L-glutamine = D-erythro-1-(imidazol-4-yl)glycerol 3-phosphate + 5-amino-1-(5-phospho-beta-D-ribosyl)imidazole-4-carboxamide + L-glutamate + H(+). It catalyses the reaction L-glutamine + H2O = L-glutamate + NH4(+). It functions in the pathway amino-acid biosynthesis; L-histidine biosynthesis; L-histidine from 5-phospho-alpha-D-ribose 1-diphosphate: step 5/9. IGPS catalyzes the conversion of PRFAR and glutamine to IGP, AICAR and glutamate. The HisH subunit catalyzes the hydrolysis of glutamine to glutamate and ammonia as part of the synthesis of IGP and AICAR. The resulting ammonia molecule is channeled to the active site of HisF. This is Imidazole glycerol phosphate synthase subunit HisH from Thermococcus kodakarensis (strain ATCC BAA-918 / JCM 12380 / KOD1) (Pyrococcus kodakaraensis (strain KOD1)).